The primary structure comprises 257 residues: 4-chloro-allylglycine synthase (257 aa).

Fe cation contacts are provided by Glu112, His119, Glu173, His203, Glu207, and His210.

The cofactor is Fe(2+).

It catalyses the reaction 4-chloro-L-lysine + AH2 + O2 = L-2-amino-4-chloropent-4-enoate + formaldehyde + A + NH4(+) + H2O. The protein operates within amino-acid metabolism. It participates in antibiotic biosynthesis. Functionally, involved in the biosynthesis of terminal alkyne-containing amino acids such as L-propargylglycine (Pra) and L-beta-ethynylserine, that are produced as antibiotics by S.cattleya. Catalyzes an oxidative C-C bond cleavage in 4-chloro-L-lysine to form 4-chloro-allyl-L-glycine (also named L-2-amino-4-chloropent-4-enoate), with release of formaldehyde and ammonia. Is also able to react with L-lysine directly to produce allylglycine in vitro. This Streptantibioticus cattleyicolor (strain ATCC 35852 / DSM 46488 / JCM 4925 / NBRC 14057 / NRRL 8057) (Streptomyces cattleya) protein is 4-chloro-allylglycine synthase.